We begin with the raw amino-acid sequence, 327 residues long: Methionyl-tRNA formyltransferase (327 aa).

121–124 is a (6S)-5,6,7,8-tetrahydrofolate binding site; the sequence is SLLP.

It belongs to the Fmt family.

The catalysed reaction is L-methionyl-tRNA(fMet) + (6R)-10-formyltetrahydrofolate = N-formyl-L-methionyl-tRNA(fMet) + (6S)-5,6,7,8-tetrahydrofolate + H(+). Attaches a formyl group to the free amino group of methionyl-tRNA(fMet). The formyl group appears to play a dual role in the initiator identity of N-formylmethionyl-tRNA by promoting its recognition by IF2 and preventing the misappropriation of this tRNA by the elongation apparatus. This Burkholderia pseudomallei (strain 1710b) protein is Methionyl-tRNA formyltransferase.